Here is a 187-residue protein sequence, read N- to C-terminus: Peptidyl-tRNA hydrolase (187 aa).

Tyr-15 is a tRNA binding site. His-20 acts as the Proton acceptor in catalysis. The tRNA site is built by Phe-65, Asn-67, and Asn-113.

The protein belongs to the PTH family. Monomer.

The protein localises to the cytoplasm. The enzyme catalyses an N-acyl-L-alpha-aminoacyl-tRNA + H2O = an N-acyl-L-amino acid + a tRNA + H(+). Functionally, hydrolyzes ribosome-free peptidyl-tRNAs (with 1 or more amino acids incorporated), which drop off the ribosome during protein synthesis, or as a result of ribosome stalling. Catalyzes the release of premature peptidyl moieties from peptidyl-tRNA molecules trapped in stalled 50S ribosomal subunits, and thus maintains levels of free tRNAs and 50S ribosomes. This chain is Peptidyl-tRNA hydrolase, found in Elusimicrobium minutum (strain Pei191).